The chain runs to 96 residues: Acylphosphatase (96 aa).

In terms of domain architecture, Acylphosphatase-like spans 4–91 (RVHVYVKGKV…GEFDDFRILY (88 aa)). Residues arginine 19 and asparagine 37 contribute to the active site.

This sequence belongs to the acylphosphatase family.

It catalyses the reaction an acyl phosphate + H2O = a carboxylate + phosphate + H(+). This chain is Acylphosphatase (acyP), found in Syntrophus aciditrophicus (strain SB).